A 307-amino-acid polypeptide reads, in one-letter code: Probable porphobilinogen deaminase (307 aa).

Residue cysteine 240 is modified to S-(dipyrrolylmethanemethyl)cysteine.

It belongs to the HMBS family. It depends on dipyrromethane as a cofactor.

It catalyses the reaction 4 porphobilinogen + H2O = hydroxymethylbilane + 4 NH4(+). It functions in the pathway porphyrin-containing compound metabolism; protoporphyrin-IX biosynthesis; coproporphyrinogen-III from 5-aminolevulinate: step 2/4. Its function is as follows. Tetrapolymerization of the monopyrrole PBG into the hydroxymethylbilane pre-uroporphyrinogen in several discrete steps. This chain is Probable porphobilinogen deaminase (hemC), found in Aeropyrum pernix (strain ATCC 700893 / DSM 11879 / JCM 9820 / NBRC 100138 / K1).